Here is a 531-residue protein sequence, read N- to C-terminus: NADH-quinone oxidoreductase subunit N (531 aa).

13 consecutive transmembrane segments (helical) span residues 13 to 33 (LAPI…EAFA), 45 to 65 (LALL…AEVI), 85 to 105 (PALA…LVIA), 150 to 170 (LFSV…TLFI), 200 to 220 (YFLL…LLYG), 242 to 262 (GLLV…VGAV), 289 to 309 (VAAF…MTWD), 310 to 330 (IQPF…VLAI), 339 to 359 (LAYS…AMSP), 365 to 385 (VFFY…LVAL), 415 to 435 (VATV…TSGF), 460 to 480 (ASAA…FTSP), and 496 to 516 (GFTA…GVWP).

Belongs to the complex I subunit 2 family. In terms of assembly, NDH-1 is composed of 14 different subunits. Subunits NuoA, H, J, K, L, M, N constitute the membrane sector of the complex.

It localises to the cell membrane. The enzyme catalyses a quinone + NADH + 5 H(+)(in) = a quinol + NAD(+) + 4 H(+)(out). Functionally, NDH-1 shuttles electrons from NADH, via FMN and iron-sulfur (Fe-S) centers, to quinones in the respiratory chain. The immediate electron acceptor for the enzyme in this species is believed to be a menaquinone. Couples the redox reaction to proton translocation (for every two electrons transferred, four hydrogen ions are translocated across the cytoplasmic membrane), and thus conserves the redox energy in a proton gradient. The polypeptide is NADH-quinone oxidoreductase subunit N (Beutenbergia cavernae (strain ATCC BAA-8 / DSM 12333 / CCUG 43141 / JCM 11478 / NBRC 16432 / NCIMB 13614 / HKI 0122)).